The primary structure comprises 251 residues: Acidic leucine-rich nuclear phosphoprotein 32 family member B (251 aa).

LRR repeat units lie at residues 16 to 40 (PAAV…LTAE), 43 to 64 (NLEF…PKLP), and 65 to 84 (KLKK…DMLA). N6-acetyllysine is present on lysine 86. The stretch at 89-110 (NLTHLNLSGNKLKDISTLEPLK) is one LRR 4 repeat. Positions 123-161 (CEVTNLNDYRESVFKLLPQLTYLDGYDREDQEAPDSDAE) constitute an LRRCT domain. Over residues 149–233 (DREDQEAPDS…DEDEDEEEEE (85 aa)) the composition is skewed to acidic residues. The interval 149–251 (DREDQEAPDS…RETDDEGEDD (103 aa)) is disordered. A Phosphoserine modification is found at serine 158. Residues 234 to 244 (GGKGEKRKRET) are compositionally biased toward basic and acidic residues. Residues 239-242 (KRKR) carry the Nuclear localization signal motif. Threonine 244 carries the phosphothreonine modification.

Belongs to the ANP32 family. Interacts with histones H3 and H4. Interacts with KLF5; this interaction induces promoter region-specific histone incorporation and inhibition of histone acetylation by ANP32B. In terms of assembly, (Microbial infection) Interacts with Sendai virus protein M. As to quaternary structure, (Microbial infection) Interacts with Measles virus protein M. (Microbial infection) Interacts with Hendra virus protein M; this interaction promotes nuclear localization of M. In terms of assembly, (Microbial infection) Interacts with influenza virus B protein PB2; this interaction strongly supports influenza B virus replication. Some glutamate residues are glycylated by TTLL8. This modification occurs exclusively on glutamate residues and results in a glycine chain on the gamma-carboxyl group. Post-translationally, directly cleaved by caspase-3/CASP3. Expressed in heart, lung, pancreas, prostate and in spleen, thymus and placenta.

It is found in the nucleus. Its subcellular location is the cytoplasm. Multifunctional protein that is involved in the regulation of many processes including cell proliferation, apoptosis, cell cycle progression or transcription. Regulates the proliferation of neuronal stem cells, differentiation of leukemic cells and progression from G1 to S phase of the cell cycle. As negative regulator of caspase-3-dependent apoptosis, may act as an antagonist of ANP32A in regulating tissue homeostasis. Exhibits histone chaperone properties, able to recruit histones to certain promoters, thus regulating the transcription of specific genes. Also plays an essential role in the nucleocytoplasmic transport of specific mRNAs via the uncommon nuclear mRNA export receptor XPO1/CRM1. Participates in the regulation of adequate adaptive immune responses by acting on mRNA expression and cell proliferation. Functionally, (Microbial infection) Plays an essential role in influenza A and B viral genome replication. Also plays a role in foamy virus mRNA export from the nucleus to the cytoplasm. In Homo sapiens (Human), this protein is Acidic leucine-rich nuclear phosphoprotein 32 family member B (ANP32B).